Consider the following 331-residue polypeptide: Lipoyl synthase (331 aa).

Positions 1–20 (MTTETNPAVTPAYNPSEKQK) are disordered. Cys-71, Cys-76, Cys-82, Cys-97, Cys-101, Cys-104, and Ser-311 together coordinate [4Fe-4S] cluster. The Radical SAM core domain maps to 82–300 (CFGKGTATFM…EEEAYKMGFA (219 aa)).

Belongs to the radical SAM superfamily. Lipoyl synthase family. The cofactor is [4Fe-4S] cluster.

It is found in the cytoplasm. The enzyme catalyses [[Fe-S] cluster scaffold protein carrying a second [4Fe-4S](2+) cluster] + N(6)-octanoyl-L-lysyl-[protein] + 2 oxidized [2Fe-2S]-[ferredoxin] + 2 S-adenosyl-L-methionine + 4 H(+) = [[Fe-S] cluster scaffold protein] + N(6)-[(R)-dihydrolipoyl]-L-lysyl-[protein] + 4 Fe(3+) + 2 hydrogen sulfide + 2 5'-deoxyadenosine + 2 L-methionine + 2 reduced [2Fe-2S]-[ferredoxin]. The protein operates within protein modification; protein lipoylation via endogenous pathway; protein N(6)-(lipoyl)lysine from octanoyl-[acyl-carrier-protein]: step 2/2. Functionally, catalyzes the radical-mediated insertion of two sulfur atoms into the C-6 and C-8 positions of the octanoyl moiety bound to the lipoyl domains of lipoate-dependent enzymes, thereby converting the octanoylated domains into lipoylated derivatives. The sequence is that of Lipoyl synthase from Janthinobacterium sp. (strain Marseille) (Minibacterium massiliensis).